A 368-amino-acid chain; its full sequence is H-2 class I histocompatibility antigen, K-D alpha chain (368 aa).

An N-terminal signal peptide occupies residues M1–A21. Residues G22–G111 are alpha-1. At G22 to T305 the chain is on the extracellular side. A glycan (N-linked (GlcNAc...) asparagine) is linked at N107. The interval G112–T203 is alpha-2. A disulfide bond links C122 and C185. 2 N-linked (GlcNAc...) asparagine glycosylation sites follow: N197 and N277. Residues D204–W295 are alpha-3. The Ig-like C1-type domain maps to P206–R294. C224 and C280 are oxidised to a cystine. Residues K296–T305 form a connecting peptide region. The helical transmembrane segment at V306–M328 threads the bilayer. The Cytoplasmic segment spans residues K329 to A368. Phosphoserine occurs at positions 350 and 353.

Belongs to the MHC class I family. Heterodimer of an alpha chain and a beta chain (beta-2-microglobulin).

It is found in the membrane. Its function is as follows. Involved in the presentation of foreign antigens to the immune system. The protein is H-2 class I histocompatibility antigen, K-D alpha chain (H2-K1) of Mus musculus (Mouse).